Consider the following 207-residue polypeptide: Large ribosomal subunit protein uL4 (207 aa).

The interval 49–78 (HAVKNRSAVSGGGRKPWRQKGTGRARQGSI) is disordered.

Belongs to the universal ribosomal protein uL4 family. Part of the 50S ribosomal subunit.

Its function is as follows. One of the primary rRNA binding proteins, this protein initially binds near the 5'-end of the 23S rRNA. It is important during the early stages of 50S assembly. It makes multiple contacts with different domains of the 23S rRNA in the assembled 50S subunit and ribosome. Forms part of the polypeptide exit tunnel. The chain is Large ribosomal subunit protein uL4 (rplD) from Streptococcus pyogenes serotype M1.